The sequence spans 427 residues: Adenylosuccinate synthetase (427 aa).

GTP-binding positions include 12–18 (GDEGKGK) and 40–42 (GHT). The active-site Proton acceptor is the Asp-13. Residues Asp-13 and Gly-40 each contribute to the Mg(2+) site. IMP contacts are provided by residues 13 to 16 (DEGK), 38 to 41 (NAGH), Thr-128, Arg-142, Gln-223, Thr-238, and Arg-302. The Proton donor role is filled by His-41. Substrate is bound at residue 298–304 (TTTGRPR). Residues Arg-304, 330–332 (KLD), and 412–414 (SVG) contribute to the GTP site.

The protein belongs to the adenylosuccinate synthetase family. In terms of assembly, homodimer. Requires Mg(2+) as cofactor.

It is found in the cytoplasm. The catalysed reaction is IMP + L-aspartate + GTP = N(6)-(1,2-dicarboxyethyl)-AMP + GDP + phosphate + 2 H(+). Its pathway is purine metabolism; AMP biosynthesis via de novo pathway; AMP from IMP: step 1/2. Plays an important role in the de novo pathway of purine nucleotide biosynthesis. Catalyzes the first committed step in the biosynthesis of AMP from IMP. The sequence is that of Adenylosuccinate synthetase from Carboxydothermus hydrogenoformans (strain ATCC BAA-161 / DSM 6008 / Z-2901).